We begin with the raw amino-acid sequence, 493 residues long: Intermediate cleaving peptidase 55, mitochondrial (493 aa).

Residues 1-19 (MQFLARNLVRRVSRTQVVS) constitute a mitochondrion transit peptide. 5 residues coordinate Mn(2+): Asp-296, Asp-307, His-383, Glu-410, and Glu-433.

Belongs to the peptidase M24B family. Mn(2+) serves as cofactor.

It is found in the mitochondrion. It localises to the nucleus. In terms of biological role, aminopeptidase which cleaves preprotein intermediates that carry destabilizing N-ter amino acid residues after the mitochondrial processing peptidase (MPP) cleavage site and is thus critical for stabilization of the mitochondrial proteome. In Arabidopsis thaliana (Mouse-ear cress), this protein is Intermediate cleaving peptidase 55, mitochondrial.